The sequence spans 207 residues: UPF0126 inner membrane protein YadS (207 aa).

The chain crosses the membrane as a helical span at residues Met-1–Leu-21. Residues Ala-22–Pro-29 lie on the Cytoplasmic side of the membrane. The chain crosses the membrane as a helical span at residues Phe-30–Ala-50. The Periplasmic segment spans residues Leu-51 to Trp-58. A helical membrane pass occupies residues Val-59–Val-79. The Cytoplasmic segment spans residues Arg-80–Leu-85. Residues Pro-86–Val-106 form a helical membrane-spanning segment. The Periplasmic portion of the chain corresponds to Asn-107 to Ala-112. A helical membrane pass occupies residues Glu-113–Ile-133. Topologically, residues Arg-134–Glu-148 are cytoplasmic. The helical transmembrane segment at Ile-149–Ser-169 threads the bilayer. Position 170 (Val-170) is a topological domain, periplasmic. A helical membrane pass occupies residues Pro-171–Ile-191. Over Arg-192–Arg-207 the chain is Cytoplasmic.

Belongs to the UPF0126 family.

Its subcellular location is the cell inner membrane. In Escherichia coli O6:H1 (strain CFT073 / ATCC 700928 / UPEC), this protein is UPF0126 inner membrane protein YadS (yadS).